The following is a 71-amino-acid chain: ATP synthase F(0) complex subunit e, mitochondrial (71 aa).

Lysine 34 bears the N6-acetyllysine mark. At serine 68 the chain carries Phosphoserine.

The protein belongs to the ATPase e subunit family. In terms of assembly, component of the ATP synthase complex composed at least of ATP5F1A/subunit alpha, ATP5F1B/subunit beta, ATP5MC1/subunit c (homooctomer), MT-ATP6/subunit a, MT-ATP8/subunit 8, ATP5ME/subunit e, ATP5MF/subunit f, ATP5MG/subunit g, ATP5MK/subunit k, ATP5MJ/subunit j, ATP5F1C/subunit gamma, ATP5F1D/subunit delta, ATP5F1E/subunit epsilon, ATP5PF/subunit F6, ATP5PB/subunit b, ATP5PD/subunit d, ATP5PO/subunit OSCP. ATP synthase complex consists of a soluble F(1) head domain (subunits alpha(3) and beta(3)) - the catalytic core - and a membrane F(0) domain - the membrane proton channel (subunits c, a, 8, e, f, g, k and j). These two domains are linked by a central stalk (subunits gamma, delta, and epsilon) rotating inside the F1 region and a stationary peripheral stalk (subunits F6, b, d, and OSCP).

The protein localises to the mitochondrion. It localises to the mitochondrion inner membrane. In terms of biological role, subunit e, of the mitochondrial membrane ATP synthase complex (F(1)F(0) ATP synthase or Complex V) that produces ATP from ADP in the presence of a proton gradient across the membrane which is generated by electron transport complexes of the respiratory chain. ATP synthase complex consist of a soluble F(1) head domain - the catalytic core - and a membrane F(1) domain - the membrane proton channel. These two domains are linked by a central stalk rotating inside the F(1) region and a stationary peripheral stalk. During catalysis, ATP synthesis in the catalytic domain of F(1) is coupled via a rotary mechanism of the central stalk subunits to proton translocation. In vivo, can only synthesize ATP although its ATP hydrolase activity can be activated artificially in vitro. Part of the complex F(0) domain. The polypeptide is ATP synthase F(0) complex subunit e, mitochondrial (Rattus norvegicus (Rat)).